The chain runs to 227 residues: Large ribosomal subunit protein uL3 (227 aa).

Belongs to the universal ribosomal protein uL3 family. Part of the 50S ribosomal subunit. Forms a cluster with proteins L14 and L19.

One of the primary rRNA binding proteins, it binds directly near the 3'-end of the 23S rRNA, where it nucleates assembly of the 50S subunit. This Leuconostoc citreum (strain KM20) protein is Large ribosomal subunit protein uL3.